We begin with the raw amino-acid sequence, 492 residues long: Acetyl-coenzyme A carboxylase carboxyl transferase subunit beta, chloroplastic (492 aa).

The disordered stretch occupies residues 198–219 (STNGSDLTISESSNESESSNES). Residues 228–492 (LWVQCENCYG…FHGRFPLNQN (265 aa)) form the CoA carboxyltransferase N-terminal domain. Residues C232, C235, C251, and C254 each contribute to the Zn(2+) site. The C4-type zinc-finger motif lies at 232 to 254 (CENCYGLNYKKFLKSKMYLCEQC).

The protein belongs to the AccD/PCCB family. As to quaternary structure, acetyl-CoA carboxylase is a heterohexamer composed of biotin carboxyl carrier protein, biotin carboxylase and 2 subunits each of ACCase subunit alpha and ACCase plastid-coded subunit beta (accD). Zn(2+) serves as cofactor.

Its subcellular location is the plastid. It localises to the chloroplast stroma. It carries out the reaction N(6)-carboxybiotinyl-L-lysyl-[protein] + acetyl-CoA = N(6)-biotinyl-L-lysyl-[protein] + malonyl-CoA. It participates in lipid metabolism; malonyl-CoA biosynthesis; malonyl-CoA from acetyl-CoA: step 1/1. Functionally, component of the acetyl coenzyme A carboxylase (ACC) complex. Biotin carboxylase (BC) catalyzes the carboxylation of biotin on its carrier protein (BCCP) and then the CO(2) group is transferred by the transcarboxylase to acetyl-CoA to form malonyl-CoA. The polypeptide is Acetyl-coenzyme A carboxylase carboxyl transferase subunit beta, chloroplastic (Citrus sinensis (Sweet orange)).